The sequence spans 161 residues: Large ribosomal subunit protein uL15 (161 aa).

Positions 1–13 (MKLNELRDNEGAA) are enriched in basic and acidic residues. The segment at 1–51 (MKLNELRDNEGAARKKKRVARGPGSGKGKTAGRGIKGQKSRSGVALNGYEG) is disordered. Over residues 23–35 (PGSGKGKTAGRGI) the composition is skewed to gly residues.

It belongs to the universal ribosomal protein uL15 family. Part of the 50S ribosomal subunit.

In terms of biological role, binds to the 23S rRNA. The polypeptide is Large ribosomal subunit protein uL15 (Cereibacter sphaeroides (strain ATCC 17023 / DSM 158 / JCM 6121 / CCUG 31486 / LMG 2827 / NBRC 12203 / NCIMB 8253 / ATH 2.4.1.) (Rhodobacter sphaeroides)).